Reading from the N-terminus, the 261-residue chain is Endonuclease NucS (261 aa).

This sequence belongs to the NucS endonuclease family.

The protein localises to the cytoplasm. Functionally, cleaves both 3' and 5' ssDNA extremities of branched DNA structures. This Aeropyrum pernix (strain ATCC 700893 / DSM 11879 / JCM 9820 / NBRC 100138 / K1) protein is Endonuclease NucS.